The following is a 152-amino-acid chain: UPF0266 membrane protein CKO_01158 (152 aa).

3 helical membrane-spanning segments follow: residues Leu6 to Met26, Val45 to His65, and Ala67 to Val87.

It belongs to the UPF0266 family.

It localises to the cell inner membrane. The protein is UPF0266 membrane protein CKO_01158 of Citrobacter koseri (strain ATCC BAA-895 / CDC 4225-83 / SGSC4696).